A 246-amino-acid chain; its full sequence is MAGHSKWANIKHRKAAQDAQRGKIFTKLIRELVTAAKLGGGDVNANPRLRTAVDKALSSNMTRDTINRAIERGVGGGDDTNMETKIYEGYGPGGTAVMVECLSDNANRTISQVRPSFTKCGGNLGTEGSVGYLFSKKGLILITSGDEDVIMEAAIEAGADDVQVQEDGSFEVYTAWEELGAVRDGIESAGIKIDNAEVTMIPSTTVELDAETAPKLLKLIDMLEDCDDVQNVYHNGEISDEIAAML.

The protein belongs to the TACO1 family.

It localises to the cytoplasm. The polypeptide is Probable transcriptional regulatory protein PM0980 (Pasteurella multocida (strain Pm70)).